The chain runs to 101 residues: uncharacterized protein (101 aa).

Positions 1–23 are cleaved as a signal peptide; it reads MERRTGVVLIIFVTFCEAMMARA. Residues 38-58 traverse the membrane as a helical segment; that stretch reads FLLFIIHTSCTMVAFIIGNLA.

The protein localises to the host membrane. This is an uncharacterized protein from Cryphonectria parasitica (Chestnut blight fungus).